Consider the following 110-residue polypeptide: Large ribosomal subunit protein uL24 (110 aa).

It belongs to the universal ribosomal protein uL24 family. In terms of assembly, part of the 50S ribosomal subunit.

Functionally, one of two assembly initiator proteins, it binds directly to the 5'-end of the 23S rRNA, where it nucleates assembly of the 50S subunit. One of the proteins that surrounds the polypeptide exit tunnel on the outside of the subunit. In Frankia alni (strain DSM 45986 / CECT 9034 / ACN14a), this protein is Large ribosomal subunit protein uL24.